The primary structure comprises 494 residues: Voltage-gated potassium channel regulatory subunit KCNF1 (494 aa).

At 1–183 (MDGSGERSLP…KPESSCPARV (183 aa)) the chain is on the cytoplasmic side. The chain crosses the membrane as a helical span at residues 184-204 (VAVLSFLLILVSSVVMCMGTI). A helical transmembrane segment spans residues 224 to 244 (NVETACIGWFTLEYLLRLFSS). Over 245–249 (PNKLH) the chain is Cytoplasmic. Residues 250–270 (FALSFMNIVDVLAILPFYVSL) form a helical membrane-spanning segment. Residues 290 to 310 (QALRIMRIARIFKLARHSSGL) traverse the membrane as a helical; Voltage-sensor segment. The Cytoplasmic segment spans residues 311-324 (QTLTYALKRSFKEL). The helical transmembrane segment at 325–345 (GLLLMYLAVGIFVFSALGYTM) threads the bilayer. An intramembrane region (pore-forming) is located at residues 358–378 (PQSFWWAIITMTTVGYGDIYP). Positions 370–375 (TVGYGD) match the Selectivity filter motif. The chain crosses the membrane as a helical span at residues 386–406 (NAAISFLCGVIAIALPIHPII). Residues 407-494 (NNFVRYYNKQ…HHRTRLQSCK (88 aa)) lie on the Cytoplasmic side of the membrane. Residues 433–469 (NSSSGGEGKTGGSRSDLDNLPPEPAGKEAPSCSSRLK) form a disordered region.

It belongs to the potassium channel family. F (TC 1.A.1.2) subfamily. Kv5.1/KCNF1 sub-subfamily. Heterotetramer with KCNB1 or KCNB2. As to expression, detected in heart, brain, liver, skeletal muscle, kidney and pancreas.

It localises to the cell membrane. Functionally, regulatory alpha-subunit of the voltage-gated potassium (Kv) channel which, when coassembled with KCNB1 or KCNB2, can modulate their expression and their gating kinetics by acting on deactivation upon repolarization and inactivation during maintained depolarization. Accelerates inactivation but has relatively little effect on deactivation. Coexpression with KCNB1 or KCNB2 markedly slows inactivation. Each modulatory subunit has its own specific properties of regulation, and can lead to extensive inhibitions, to large changes in kinetics, and/or to large shifts in the voltage dependencies of the inactivation process. The gating kinetics depends on the nature and stoichiometry of the associated regulatory sunbunit. Fails to produce a potassium current when expressed alone. The sequence is that of Voltage-gated potassium channel regulatory subunit KCNF1 from Homo sapiens (Human).